Consider the following 610-residue polypeptide: GPI transamidase component GPI16 (610 aa).

The N-terminal stretch at Met1–Ala19 is a signal peptide. Residues Glu20–Asn551 lie on the Lumenal side of the membrane. Residue Asn184 is glycosylated (N-linked (GlcNAc...) asparagine). A helical transmembrane segment spans residues Val552 to Val572. Over Lys573–Asp610 the chain is Cytoplasmic.

Belongs to the PIGT family. As to quaternary structure, forms a complex with CDC91, GPI17, GPI8 and GAA1. Post-translationally, the disulfide bond between GPI8 and GPI16 is important for normal enzyme activity.

Its subcellular location is the endoplasmic reticulum membrane. The protein operates within glycolipid biosynthesis; glycosylphosphatidylinositol-anchor biosynthesis. In terms of biological role, component of the GPI transamidase complex. Involved in transfer of GPI to proteins. The sequence is that of GPI transamidase component GPI16 (GPI16) from Saccharomyces cerevisiae (strain ATCC 204508 / S288c) (Baker's yeast).